Consider the following 208-residue polypeptide: Methylthioribulose-1-phosphate dehydratase (208 aa).

Zn(2+)-binding residues include histidine 101 and histidine 103.

The protein belongs to the aldolase class II family. MtnB subfamily. Zn(2+) serves as cofactor.

It carries out the reaction 5-(methylsulfanyl)-D-ribulose 1-phosphate = 5-methylsulfanyl-2,3-dioxopentyl phosphate + H2O. The protein operates within amino-acid biosynthesis; L-methionine biosynthesis via salvage pathway; L-methionine from S-methyl-5-thio-alpha-D-ribose 1-phosphate: step 2/6. In terms of biological role, catalyzes the dehydration of methylthioribulose-1-phosphate (MTRu-1-P) into 2,3-diketo-5-methylthiopentyl-1-phosphate (DK-MTP-1-P). This is Methylthioribulose-1-phosphate dehydratase from Gluconobacter oxydans (strain 621H) (Gluconobacter suboxydans).